Here is a 95-residue protein sequence, read N- to C-terminus: Aspartyl/glutamyl-tRNA(Asn/Gln) amidotransferase subunit C (95 aa).

The protein belongs to the GatC family. In terms of assembly, heterotrimer of A, B and C subunits.

The enzyme catalyses L-glutamyl-tRNA(Gln) + L-glutamine + ATP + H2O = L-glutaminyl-tRNA(Gln) + L-glutamate + ADP + phosphate + H(+). It catalyses the reaction L-aspartyl-tRNA(Asn) + L-glutamine + ATP + H2O = L-asparaginyl-tRNA(Asn) + L-glutamate + ADP + phosphate + 2 H(+). Functionally, allows the formation of correctly charged Asn-tRNA(Asn) or Gln-tRNA(Gln) through the transamidation of misacylated Asp-tRNA(Asn) or Glu-tRNA(Gln) in organisms which lack either or both of asparaginyl-tRNA or glutaminyl-tRNA synthetases. The reaction takes place in the presence of glutamine and ATP through an activated phospho-Asp-tRNA(Asn) or phospho-Glu-tRNA(Gln). The protein is Aspartyl/glutamyl-tRNA(Asn/Gln) amidotransferase subunit C of Rhodopseudomonas palustris (strain TIE-1).